A 169-amino-acid chain; its full sequence is Nucleoside diphosphate kinase 3-A (169 aa).

ADP contacts are provided by Lys-29, Arg-105, Thr-111, Arg-122, Val-129, and Asn-132. Catalysis depends on His-135, which acts as the Pros-phosphohistidine intermediate.

Belongs to the NDK family. As to quaternary structure, homohexamer. Mg(2+) serves as cofactor.

It localises to the mitochondrion outer membrane. It is found in the cytoplasm. The protein localises to the cytoskeleton. Its subcellular location is the cilium basal body. The enzyme catalyses a 2'-deoxyribonucleoside 5'-diphosphate + ATP = a 2'-deoxyribonucleoside 5'-triphosphate + ADP. The catalysed reaction is a ribonucleoside 5'-diphosphate + ATP = a ribonucleoside 5'-triphosphate + ADP. In terms of biological role, catalyzes the phosphorylation of ribonucleosides and deoxyribonucleoside diphosphates, other than ATP, into the corresponding triphosphates with ATP as the major phosphate donor. The ATP gamma phosphate is transferred to the nucleoside diphosphate beta phosphate via a ping-pong mechanism, using a phosphorylated active-site intermediate. Through the catalyzed exchange of gamma-phosphate between di- and triphosphonucleosides participates in regulation of intracellular nucleotide homeostasis. Required for ciliary function during renal development. Independently of its kinase activity, facilitates mitochondrial tethering prior to membrane fusion through its direct membrane-binding and hexamerization. Implicated in repair of both single- and double-stranded breaks in DNA, independently of its kinase activity. In Xenopus laevis (African clawed frog), this protein is Nucleoside diphosphate kinase 3-A.